Reading from the N-terminus, the 207-residue chain is Nuclear transcription factor Y subunit beta (207 aa).

Positions 1–52 (MTMDGDSSTTDASQLGISADYIGGSHYVIQPHDDTEDSMNDHEDTNGSKESF) are a domain. The tract at residues 27–52 (YVIQPHDDTEDSMNDHEDTNGSKESF) is disordered. A compositionally biased stretch (basic and acidic residues) spans 39–52 (MNDHEDTNGSKESF). A b domain region spans residues 53–142 (REQDIYLPIA…PLKLYLQKFR (90 aa)). Residues 59 to 65 (LPIANVA) mediate DNA binding. The tract at residues 86–97 (VQECVSEFISFI) is subunit association domain (SAD). Residue Lys140 forms a Glycyl lysine isopeptide (Lys-Gly) (interchain with G-Cter in ubiquitin) linkage. Positions 143-207 (EAMKGEKGIG…ISGVQQIQFS (65 aa)) are c domain.

Belongs to the NFYB/HAP3 subunit family. As to quaternary structure, heterotrimeric transcription factor composed of three components, NF-YA, NF-YB and NF-YC. NF-YB and NF-YC must interact and dimerize for NF-YA association and DNA binding. Interacts with C1QBP. In terms of processing, monoubiquitination at Lys-140 plays an important role in transcriptional activation by allowing the deposition of histone H3 methylations as well as histone H2B monoubiquitination at 'Lys-121'.

It localises to the nucleus. Its function is as follows. Component of the sequence-specific heterotrimeric transcription factor (NF-Y) which specifically recognizes a 5'-CCAAT-3' box motif found in the promoters of its target genes. NF-Y can function as both an activator and a repressor, depending on its interacting cofactors. The protein is Nuclear transcription factor Y subunit beta (NFYB) of Bos taurus (Bovine).